Reading from the N-terminus, the 314-residue chain is R2-like ligand binding oxidase (314 aa).

Mn(2+) is bound by residues Glu-68, Glu-101, and His-104. A cross-link (3-(O4'-tyrosyl)-valine (Val-Tyr)) is located at residues 71–162 (VTEDIQPFMS…AAQVRASVTY (92 aa)). Glu-101 contributes to the Fe cation binding site. Positions 167, 202, and 205 each coordinate Fe cation.

The protein belongs to the ribonucleoside diphosphate reductase small chain family. R2-like ligand binding oxidase subfamily. Homodimer. Fe cation serves as cofactor. Requires Mn(2+) as cofactor.

Its function is as follows. Probable oxidase that might be involved in lipid metabolism. In Mycobacterium tuberculosis (strain ATCC 25177 / H37Ra), this protein is R2-like ligand binding oxidase.